The primary structure comprises 550 residues: Chaperonin GroEL 1 (550 aa).

Residues 29-32 (TIGP), 86-90 (DGTTT), Gly-413, 477-479 (NAA), and Asp-493 each bind ATP. The disordered stretch occupies residues 524–550 (AVSDGDHGHSHGHGHSHGHSHPQGPGF). Over residues 533-543 (SHGHGHSHGHS) the composition is skewed to basic residues.

Belongs to the chaperonin (HSP60) family. As to quaternary structure, forms a cylinder of 14 subunits composed of two heptameric rings stacked back-to-back. Interacts with the co-chaperonin GroES.

It is found in the cytoplasm. It carries out the reaction ATP + H2O + a folded polypeptide = ADP + phosphate + an unfolded polypeptide.. In terms of biological role, together with its co-chaperonin GroES, plays an essential role in assisting protein folding. The GroEL-GroES system forms a nano-cage that allows encapsulation of the non-native substrate proteins and provides a physical environment optimized to promote and accelerate protein folding. In Frankia alni (strain DSM 45986 / CECT 9034 / ACN14a), this protein is Chaperonin GroEL 1.